The sequence spans 239 residues: Protein Thf1 (239 aa).

The stretch at 183-221 (ERVRKDLELYRSSLDRMKQARAVVEEMVKAARRQQERRQ) forms a coiled coil. A compositionally biased stretch (basic and acidic residues) spans 211 to 221 (KAARRQQERRQ). Residues 211-239 (KAARRQQERRQSAASLPETSLGDPSKPGS) form a disordered region.

This sequence belongs to the THF1 family.

Its function is as follows. May be involved in photosynthetic membrane biogenesis. This chain is Protein Thf1, found in Synechococcus sp. (strain JA-2-3B'a(2-13)) (Cyanobacteria bacterium Yellowstone B-Prime).